The chain runs to 151 residues: MSSDWDSVTIIGQKARVGGGGPRENVAKTSSQLNAARRAGLVVGTEKKYGTANTKSNPEGQRLTKLDATDDVVAVKKVDVSVGKAIQQARQEKKLTQKELATKVNEKPNVINDYEAGRAIPNQQLLAKLERALGVKLRGKNIGEPLFAKKK.

The segment at 1-32 (MSSDWDSVTIIGQKARVGGGGPRENVAKTSSQ) is disordered. Residues 86–140 (IQQARQEKKLTQKELATKVNEKPNVINDYEAGRAIPNQQLLAKLERALGVKLRGK) enclose the HTH cro/C1-type domain. A DNA-binding region (H-T-H motif) is located at residues 97–116 (QKELATKVNEKPNVINDYEA).

Belongs to the MBF1 family.

Functionally, transcriptional coactivator that stimulates GCN4-dependent transcriptional activity by bridging the DNA-binding region of GCN4 and TBP (SPT15), thereby recruiting TBP to GCN4-bound promoters. Involved in induction of the ribosome quality control (RQC) pathway; a pathway that degrades nascent peptide chains during problematic translation. Required to prevent stalled ribosomes from frameshifting. The polypeptide is Multiprotein-bridging factor 1 (MBF1) (Candida albicans (strain SC5314 / ATCC MYA-2876) (Yeast)).